Here is a 227-residue protein sequence, read N- to C-terminus: Phosphoribosylformylglycinamidine synthase subunit PurQ (227 aa).

The 223-residue stretch at 3-225 folds into the Glutamine amidotransferase type-1 domain; sequence FAVIVFPGSN…LKQWRETYVV (223 aa). The active-site Nucleophile is cysteine 86. Residues histidine 194 and glutamate 196 contribute to the active site.

As to quaternary structure, part of the FGAM synthase complex composed of 1 PurL, 1 PurQ and 2 PurS subunits.

It localises to the cytoplasm. The enzyme catalyses N(2)-formyl-N(1)-(5-phospho-beta-D-ribosyl)glycinamide + L-glutamine + ATP + H2O = 2-formamido-N(1)-(5-O-phospho-beta-D-ribosyl)acetamidine + L-glutamate + ADP + phosphate + H(+). It catalyses the reaction L-glutamine + H2O = L-glutamate + NH4(+). The protein operates within purine metabolism; IMP biosynthesis via de novo pathway; 5-amino-1-(5-phospho-D-ribosyl)imidazole from N(2)-formyl-N(1)-(5-phospho-D-ribosyl)glycinamide: step 1/2. In terms of biological role, part of the phosphoribosylformylglycinamidine synthase complex involved in the purines biosynthetic pathway. Catalyzes the ATP-dependent conversion of formylglycinamide ribonucleotide (FGAR) and glutamine to yield formylglycinamidine ribonucleotide (FGAM) and glutamate. The FGAM synthase complex is composed of three subunits. PurQ produces an ammonia molecule by converting glutamine to glutamate. PurL transfers the ammonia molecule to FGAR to form FGAM in an ATP-dependent manner. PurS interacts with PurQ and PurL and is thought to assist in the transfer of the ammonia molecule from PurQ to PurL. The sequence is that of Phosphoribosylformylglycinamidine synthase subunit PurQ from Bacillus cereus (strain Q1).